Here is a 197-residue protein sequence, read N- to C-terminus: Recombination protein RecR (197 aa).

The C4-type zinc-finger motif lies at 56–71 (CPVCGTLDTRAPCSIC). The 96-residue stretch at 79–174 (TLICVVRDVA…TVSGLAQGVP (96 aa)) folds into the Toprim domain.

The protein belongs to the RecR family.

Functionally, may play a role in DNA repair. It seems to be involved in an RecBC-independent recombinational process of DNA repair. It may act with RecF and RecO. The protein is Recombination protein RecR of Rhodospirillum rubrum (strain ATCC 11170 / ATH 1.1.1 / DSM 467 / LMG 4362 / NCIMB 8255 / S1).